We begin with the raw amino-acid sequence, 89 residues long: Cell division topological specificity factor (89 aa).

It belongs to the MinE family.

In terms of biological role, prevents the cell division inhibition by proteins MinC and MinD at internal division sites while permitting inhibition at polar sites. This ensures cell division at the proper site by restricting the formation of a division septum at the midpoint of the long axis of the cell. In Sodalis glossinidius (strain morsitans), this protein is Cell division topological specificity factor.